A 355-amino-acid chain; its full sequence is GTPase Obg (355 aa).

Residues 1–159 (MKLVDEAEIL…RLLKLELKLL (159 aa)) form the Obg domain. One can recognise an OBG-type G domain in the interval 160-342 (ADVGLLGFPN…IMKDVMAFFD (183 aa)). Residues 166–173 (GFPNAGKS), 191–195 (FTTLY), 213–216 (DVPG), 292–295 (NKAD), and 323–325 (SAL) contribute to the GTP site. Residues Ser-173 and Thr-193 each coordinate Mg(2+).

It belongs to the TRAFAC class OBG-HflX-like GTPase superfamily. OBG GTPase family. As to quaternary structure, monomer. It depends on Mg(2+) as a cofactor.

It localises to the cytoplasm. In terms of biological role, an essential GTPase which binds GTP, GDP and possibly (p)ppGpp with moderate affinity, with high nucleotide exchange rates and a fairly low GTP hydrolysis rate. Plays a role in control of the cell cycle, stress response, ribosome biogenesis and in those bacteria that undergo differentiation, in morphogenesis control. In Xanthomonas euvesicatoria pv. vesicatoria (strain 85-10) (Xanthomonas campestris pv. vesicatoria), this protein is GTPase Obg.